We begin with the raw amino-acid sequence, 231 residues long: L-ribulose-5-phosphate 4-epimerase SgbE (231 aa).

Substrate-binding positions include G27–N28, S44–G45, and S74–S75. The Zn(2+) site is built by D76, H95, and H97. The Proton donor/acceptor role is filled by D120. Position 171 (H171) interacts with Zn(2+). The Proton donor/acceptor role is filled by Y229.

The protein belongs to the aldolase class II family. AraD/FucA subfamily. Zn(2+) serves as cofactor.

It carries out the reaction L-ribulose 5-phosphate = D-xylulose 5-phosphate. In terms of biological role, catalyzes the interconversion of L-ribulose 5-phosphate (LRu5P) and D-xylulose 5-phosphate (D-Xu5P) via a retroaldol/aldol mechanism (carbon-carbon bond cleavage analogous to a class II aldolase reaction). May be involved in the utilization of 2,3-diketo-L-gulonate. The sequence is that of L-ribulose-5-phosphate 4-epimerase SgbE from Escherichia coli (strain K12).